Consider the following 381-residue polypeptide: uncharacterized protein (381 aa).

The signal sequence occupies residues 1–16; that stretch reads MQTLLFYFFFINLIFA. At 17–303 the chain is on the lumenal side; that stretch reads HDLNVKTYKP…KILENSPCPN (287 aa). Cysteines 118 and 149 form a disulfide. Residues asparagine 133, asparagine 192, asparagine 225, asparagine 243, asparagine 246, and asparagine 287 are each glycosylated (N-linked (GlcNAc...) asparagine). The chain crosses the membrane as a helical span at residues 304-324; that stretch reads QPSIQPFGILMMLVSTIYGNF. The Cytoplasmic portion of the chain corresponds to 325 to 359; it reads KNLYNCIKRNTIGYIYNSIYDFWITEGMLFPMRNM. A helical membrane pass occupies residues 360–380; it reads DIFKITAISIGLSIPVFLWLL. Residue lysine 381 is a topological domain, lumenal.

The protein belongs to the calreticulin family.

The protein localises to the endoplasmic reticulum membrane. This is an uncharacterized protein from Schizosaccharomyces pombe (strain 972 / ATCC 24843) (Fission yeast).